We begin with the raw amino-acid sequence, 307 residues long: Elongation factor Ts (307 aa).

Residues threonine 79–valine 82 are involved in Mg(2+) ion dislocation from EF-Tu.

It belongs to the EF-Ts family.

Its subcellular location is the cytoplasm. Its function is as follows. Associates with the EF-Tu.GDP complex and induces the exchange of GDP to GTP. It remains bound to the aminoacyl-tRNA.EF-Tu.GTP complex up to the GTP hydrolysis stage on the ribosome. The protein is Elongation factor Ts of Bartonella bacilliformis (strain ATCC 35685 / KC583 / Herrer 020/F12,63).